The following is a 156-amino-acid chain: Small ribosomal subunit protein uS7 (156 aa).

It belongs to the universal ribosomal protein uS7 family. As to quaternary structure, part of the 30S ribosomal subunit. Contacts proteins S9 and S11.

In terms of biological role, one of the primary rRNA binding proteins, it binds directly to 16S rRNA where it nucleates assembly of the head domain of the 30S subunit. Is located at the subunit interface close to the decoding center, probably blocks exit of the E-site tRNA. The sequence is that of Small ribosomal subunit protein uS7 from Rhodopseudomonas palustris (strain BisB18).